Here is a 525-residue protein sequence, read N- to C-terminus: GMP synthase [glutamine-hydrolyzing] (525 aa).

One can recognise a Glutamine amidotransferase type-1 domain in the interval 9-207 (RILILDFGSQ…VLDICQCEKL (199 aa)). The Nucleophile role is filled by Cys-86. Active-site residues include His-181 and Glu-183. The GMPS ATP-PPase domain maps to 208–400 (WTPDAIIEDA…LGLPYDMLYR (193 aa)). 235–241 (SGGVDSS) contributes to the ATP binding site.

In terms of assembly, homodimer.

The catalysed reaction is XMP + L-glutamine + ATP + H2O = GMP + L-glutamate + AMP + diphosphate + 2 H(+). Its pathway is purine metabolism; GMP biosynthesis; GMP from XMP (L-Gln route): step 1/1. Functionally, catalyzes the synthesis of GMP from XMP. The chain is GMP synthase [glutamine-hydrolyzing] from Pseudoalteromonas atlantica (strain T6c / ATCC BAA-1087).